The chain runs to 252 residues: 5'-nucleotidase SurE (252 aa).

Positions 8, 9, 40, and 93 each coordinate a divalent metal cation.

Belongs to the SurE nucleotidase family. A divalent metal cation serves as cofactor.

Its subcellular location is the cytoplasm. It carries out the reaction a ribonucleoside 5'-phosphate + H2O = a ribonucleoside + phosphate. Nucleotidase that shows phosphatase activity on nucleoside 5'-monophosphates. The protein is 5'-nucleotidase SurE of Methylocella silvestris (strain DSM 15510 / CIP 108128 / LMG 27833 / NCIMB 13906 / BL2).